Reading from the N-terminus, the 371-residue chain is dTDP-4-amino-4,6-dideoxy-D-glucose transaminase (371 aa).

The residue at position 186 (lysine 186) is an N6-(pyridoxal phosphate)lysine.

Belongs to the DegT/DnrJ/EryC1 family. Requires pyridoxal 5'-phosphate as cofactor.

The catalysed reaction is dTDP-4-amino-4,6-dideoxy-D-glucose + 2-oxoglutarate = dTDP-4-dehydro-6-deoxy-alpha-D-glucose + L-glutamate. The protein operates within bacterial outer membrane biogenesis; lipopolysaccharide biosynthesis. Its function is as follows. Catalyzes the conversion of dTDP-4-dehydro-6-deoxy-D-glucose (dTDP-D-Glc4O) to dTDP-4-amino-4,6-dideoxy-D-glucose (dTDP-D-Qui4N). The sequence is that of dTDP-4-amino-4,6-dideoxy-D-glucose transaminase (vioA) from Escherichia coli.